The primary structure comprises 354 residues: Guanine nucleotide-binding protein G(t) subunit alpha-3 (354 aa).

Residues 1 to 27 (MGSGISSESKESAKRSKELEKKLQEDA) are disordered. A lipid anchor (N-myristoyl glycine) is attached at G2. Positions 8 to 27 (ESKESAKRSKELEKKLQEDA) are enriched in basic and acidic residues. The G-alpha domain maps to 32 to 354 (RTVKLLLLGA…KENLKDCGLF (323 aa)). Positions 35 to 48 (KLLLLGAGESGKST) are G1 motif. Residues 40–47 (GAGESGKS), 175–181 (LHSRVKT), 200–204 (DVGGQ), 269–272 (NKKD), and A326 each bind GTP. 2 residues coordinate Mg(2+): S47 and T181. The tract at residues 173–181 (DVLHSRVKT) is G2 motif. The tract at residues 196–205 (FRMFDVGGQR) is G3 motif. The tract at residues 265 to 272 (VLFLNKKD) is G4 motif. Positions 324-329 (TCATDT) are G5 motif.

This sequence belongs to the G-alpha family. G(i/o/t/z) subfamily. In terms of assembly, g proteins are composed of 3 units; alpha, beta and gamma, respectively GNAT3, GNB1 and GNG13 for Gustducin heterotrimer for bitter taste transduction. The alpha chain contains the guanine nucleotide binding site. Component of the TAS2R14-GNAT3 complex, consisting of TAS2R14, GNAT3, GNB1 and GNG2; within the complex interacts with TAS2R14; this complex plays a role in the perception of bitterness. Gustducin heterotrimer may also be composed of GNAT3, GNB3 and GNG13. In terms of processing, potential N-myristoylation may anchor alpha-subunit to the inner surface of plasma membrane. Expressed in taste buds (sensory organs of clustered epithelial cells) of the circumvallate and foliate papillae of the tongue at protein level. Expressed in enteroendocrine L cells of the gut. Detected also in spermatozoa.

It is found in the cytoplasm. In terms of biological role, guanine nucleotide-binding protein (G protein) alpha subunit playing a prominent role in bitter and sweet taste transduction as well as in umami (monosodium glutamate, monopotassium glutamate, and inosine monophosphate) taste transduction. Transduction by this alpha subunit involves coupling of specific cell-surface receptors with a cGMP-phosphodiesterase; Activation of phosphodiesterase lowers intracellular levels of cAMP and cGMP which may open a cyclic nucleotide-suppressible cation channel leading to influx of calcium, ultimately leading to release of neurotransmitter. Indeed, denatonium and strychnine induce transient reduction in cAMP and cGMP in taste tissue, whereas this decrease is inhibited by GNAT3 antibody. Gustducin heterotrimer transduces response to bitter and sweet compounds via regulation of phosphodiesterase for alpha subunit, as well as via activation of phospholipase C for beta and gamma subunits, with ultimate increase inositol trisphosphate and increase of intracellular Calcium. GNAT3 can functionally couple to taste receptors to transmit intracellular signal: receptor heterodimer TAS1R2/TAS1R3 senses sweetness and TAS1R1/TAS1R3 transduces umami taste, whereas the T2R family GPCRs such as TAS2R14 act as bitter sensors. Also functions as lumenal sugar sensors in the gut to control the expression of the Na+-glucose transporter SGLT1 in response to dietaty sugar, as well as the secretion of Glucagon-like peptide-1, GLP-1 and glucose-dependent insulinotropic polypeptide, GIP. Thus, may modulate the gut capacity to absorb sugars, with implications in malabsorption syndromes and diet-related disorders including diabetes and obesity. In Homo sapiens (Human), this protein is Guanine nucleotide-binding protein G(t) subunit alpha-3 (GNAT3).